A 428-amino-acid polypeptide reads, in one-letter code: Serine--tRNA ligase (428 aa).

231–233 is a binding site for L-serine; it reads TAE. ATP is bound by residues 262–264 and V278; that span reads RRE. E285 provides a ligand contact to L-serine. 349–352 lines the ATP pocket; sequence EVSS. An L-serine-binding site is contributed by S384.

The protein belongs to the class-II aminoacyl-tRNA synthetase family. Type-1 seryl-tRNA synthetase subfamily. Homodimer. The tRNA molecule binds across the dimer.

It is found in the cytoplasm. It carries out the reaction tRNA(Ser) + L-serine + ATP = L-seryl-tRNA(Ser) + AMP + diphosphate + H(+). The catalysed reaction is tRNA(Sec) + L-serine + ATP = L-seryl-tRNA(Sec) + AMP + diphosphate + H(+). It functions in the pathway aminoacyl-tRNA biosynthesis; selenocysteinyl-tRNA(Sec) biosynthesis; L-seryl-tRNA(Sec) from L-serine and tRNA(Sec): step 1/1. Catalyzes the attachment of serine to tRNA(Ser). Is also able to aminoacylate tRNA(Sec) with serine, to form the misacylated tRNA L-seryl-tRNA(Sec), which will be further converted into selenocysteinyl-tRNA(Sec). This Chlamydia trachomatis serovar A (strain ATCC VR-571B / DSM 19440 / HAR-13) protein is Serine--tRNA ligase.